Reading from the N-terminus, the 505-residue chain is Peroxisome proliferator-activated receptor gamma (505 aa).

An O-linked (GlcNAc) threonine glycan is attached at threonine 84. Position 112 is a phosphoserine (serine 112). A DNA-binding region (nuclear receptor) is located at residues 136-210 (AIECRVCGDK…VGMSHNAIRF (75 aa)). 2 consecutive NR C4-type zinc fingers follow at residues 139–159 (CRVC…CEGC) and 176–198 (CDLN…FQKC). The tract at residues 205-280 (HNAIRFGRMP…DKSPFVIYDM (76 aa)) is interaction with FAM120B. The NR LBD domain maps to 238-503 (DLRALAKHLY…HPLLQEIYKD (266 aa)). Lysine 252 participates in a covalent cross-link: Glycyl lysine isopeptide (Lys-Gly) (interchain with G-Cter in ubiquitin). Rosiglitazone contacts are provided by residues 314 to 317 (QFRS), histidine 351, histidine 477, and tyrosine 501. Positions 495-503 (PLLQEIYKD) match the 9aaTAD motif.

Belongs to the nuclear hormone receptor family. NR1 subfamily. As to quaternary structure, interacts with FOXO1 (acetylated form). Heterodimer with other nuclear receptors, such as RXRA. The heterodimer with the retinoic acid receptor RXRA is called adipocyte-specific transcription factor ARF6. Interacts with NCOA6 coactivator, leading to a strong increase in transcription of target genes. Interacts with coactivator PPARBP, leading to a mild increase in transcription of target genes. Interacts with NOCA7 in a ligand-inducible manner. Interacts with NCOA1 and NCOA2 LXXLL motifs. Interacts with ASXL1, ASXL2, DNTTIP2, FAM120B, MAP2K1/MEK1, NR0B2, PDPK1, PRDM16, PRMT2 and TGFB1I1. Interacts (when activated by agonist) with PPP5C. Interacts with HELZ2 and THRAP3; the interaction stimulates the transcriptional activity of PPARG. Interacts with PER2, the interaction is ligand dependent and blocks PPARG recruitment to target promoters. Interacts with NOCT. Interacts with ACTN4. Interacts (when in the liganded conformation) with GPS2. Interacts with CRY1 and CRY2 in a ligand-dependent manner. In the absence of hormonal ligand, interacts with TACC1. In macrophages, interacts with PAQR3 and STUB1; the interactions promote PPARG poylubiquitination and STUB1-mediated degradation. O-GlcNAcylation at Thr-84 reduces transcriptional activity in adipocytes. Post-translationally, phosphorylated in basal conditions and dephosphorylated when treated with the ligand. May be dephosphorylated by PPP5C. The phosphorylated form may be inactive and dephosphorylation at Ser-112 induces adipogenic activity. In terms of processing, ubiquitinated by E3 ubiquitin-protein ligase complex containing FBXO9; leading to proteasomal degradation. Ubiquitinated at Lys-252 by TRIM55 leading to proteasomal degradation. Ubiquitinated by E3 ubiquitin-protein ligase STUB1/CHIP; leading to proteasomal degradation. As to expression, highest expression in adipose tissue. Lower in skeletal muscle, spleen, heart and liver. Also detectable in placenta, lung and ovary.

Its subcellular location is the nucleus. It localises to the cytoplasm. PDPK1 activates its transcriptional activity independently of its kinase activity. Its function is as follows. Nuclear receptor that binds peroxisome proliferators such as hypolipidemic drugs and fatty acids. Once activated by a ligand, the nuclear receptor binds to DNA specific PPAR response elements (PPRE) and modulates the transcription of its target genes, such as acyl-CoA oxidase. It therefore controls the peroxisomal beta-oxidation pathway of fatty acids. Key regulator of adipocyte differentiation and glucose homeostasis. ARF6 acts as a key regulator of the tissue-specific adipocyte P2 (aP2) enhancer. Acts as a critical regulator of gut homeostasis by suppressing NF-kappa-B-mediated pro-inflammatory responses. Plays a role in the regulation of cardiovascular circadian rhythms by regulating the transcription of BMAL1 in the blood vessels. (Microbial infection) Upon treatment with M.tuberculosis or its lipoprotein LpqH, phosphorylation of MAPK p38 and IL-6 production are modulated, probably via this protein. The protein is Peroxisome proliferator-activated receptor gamma (PPARG) of Homo sapiens (Human).